Reading from the N-terminus, the 156-residue chain is Cell division protein SepF (156 aa).

The protein belongs to the SepF family. Homodimer. Interacts with FtsZ.

It is found in the cytoplasm. Functionally, cell division protein that is part of the divisome complex and is recruited early to the Z-ring. Probably stimulates Z-ring formation, perhaps through the cross-linking of FtsZ protofilaments. Its function overlaps with FtsA. The protein is Cell division protein SepF of Bacillus cytotoxicus (strain DSM 22905 / CIP 110041 / 391-98 / NVH 391-98).